A 130-amino-acid polypeptide reads, in one-letter code: Transcription antitermination protein NusB (130 aa).

This sequence belongs to the NusB family.

Involved in transcription antitermination. Required for transcription of ribosomal RNA (rRNA) genes. Binds specifically to the boxA antiterminator sequence of the ribosomal RNA (rrn) operons. In Bacillus anthracis (strain A0248), this protein is Transcription antitermination protein NusB.